The primary structure comprises 379 residues: uncharacterized protein (379 aa).

Disordered regions lie at residues 1–20 (MLPQNSQVVHGVQDGPPVGP), 227–290 (VSQR…LQGH), and 331–371 (PGCA…RAGH). Over residues 7 to 20 (QVVHGVQDGPPVGP) the composition is skewed to low complexity. Basic and acidic residues predominate over residues 249-261 (GCKDPRVRKEPGR).

This is an uncharacterized protein from Dryophytes versicolor (chameleon treefrog).